A 100-amino-acid chain; its full sequence is uncharacterized protein (100 aa).

The N-terminal stretch at 1–23 (MKYVALAFVLSLVILQISAQVGA) is a signal peptide.

Nacreous layer of shell (at protein level). Expressed primarily in the mantle with highest level in the mantle pallium and lower level in the mantle edge.

The protein resides in the secreted. This is an uncharacterized protein from Margaritifera margaritifera (Freshwater pearl mussel).